The following is a 491-amino-acid chain: Probable Xaa-Pro aminopeptidase An01g13040 (491 aa).

Mn(2+) is bound by residues Asp276, Asp287, Glu420, and Glu459.

The protein belongs to the peptidase M24B family. Mn(2+) is required as a cofactor.

The enzyme catalyses Release of any N-terminal amino acid, including proline, that is linked to proline, even from a dipeptide or tripeptide.. Its function is as follows. Catalyzes the removal of a penultimate prolyl residue from the N-termini of peptides. This chain is Probable Xaa-Pro aminopeptidase An01g13040, found in Aspergillus niger (strain ATCC MYA-4892 / CBS 513.88 / FGSC A1513).